We begin with the raw amino-acid sequence, 883 residues long: Phosphoenolpyruvate carboxylase (883 aa).

Catalysis depends on residues H138 and K546.

It belongs to the PEPCase type 1 family. The cofactor is Mg(2+).

The enzyme catalyses oxaloacetate + phosphate = phosphoenolpyruvate + hydrogencarbonate. In terms of biological role, forms oxaloacetate, a four-carbon dicarboxylic acid source for the tricarboxylic acid cycle. This chain is Phosphoenolpyruvate carboxylase, found in Shigella flexneri.